The following is a 92-amino-acid chain: Small ribosomal subunit protein uS19 (92 aa).

It belongs to the universal ribosomal protein uS19 family.

In terms of biological role, protein S19 forms a complex with S13 that binds strongly to the 16S ribosomal RNA. The protein is Small ribosomal subunit protein uS19 of Bartonella bacilliformis (strain ATCC 35685 / KC583 / Herrer 020/F12,63).